Reading from the N-terminus, the 802-residue chain is Ribosomal protein S6 kinase alpha-5 (802 aa).

Residues 1–22 are compositionally biased toward gly residues; it reads MEEEGGSSGGAAGTSADGGDGG. The interval 1–23 is disordered; sequence MEEEGGSSGGAAGTSADGGDGGE. The Protein kinase 1 domain occupies 49–318; it reads FELLKVLGTG…ADEIKEHLFF (270 aa). ATP is bound by residues 55–63 and Lys-81; that span reads LGTGAYGKV. Asp-177 acts as the Proton acceptor in catalysis. Ser-212 is modified (phosphoserine; by autocatalysis). The AGC-kinase C-terminal domain occupies 319–387; that stretch reads QKINWDDLAA…VAPSILFKRN (69 aa). Ser-360 carries the post-translational modification Phosphoserine; by MAPK1, MAPK3 and MAPK14. Residues Ser-376 and Ser-381 each carry the phosphoserine; by autocatalysis modification. A Protein kinase 2 domain is found at 426–687; the sequence is DLKDKPLGEG…MSGLRYNEWL (262 aa). ATP-binding positions include 432–440 and Lys-455; that span reads LGEGSFSIC. Catalysis depends on Asp-544, which acts as the Proton acceptor. Thr-581 is modified (phosphothreonine; by MAPK1, MAPK3 and MAPK14). Phosphoserine occurs at positions 647, 657, 691, and 695. At Thr-700 the chain carries Phosphothreonine; by MAPK1, MAPK3 and MAPK14. A disordered region spans residues 741 to 802; it reads AKRRKMKKTS…TLFQFSDSVA (62 aa). Low complexity predominate over residues 749–779; it reads TSTSTETRSSSSESSHSSSSHSHGKTTPTKT. Residues Ser-750, Ser-752, and Ser-758 each carry the phosphoserine; by autocatalysis modification. The span at 780 to 802 shows a compositional bias: polar residues; sequence LQPSNPADSNNPETLFQFSDSVA. At Ser-798 the chain carries Phosphoserine.

Belongs to the protein kinase superfamily. AGC Ser/Thr protein kinase family. S6 kinase subfamily. As to quaternary structure, forms a complex with either MAPK1/ERK2 or MAPK3/ERK1 in quiescent cells which transiently dissociates following mitogenic stimulation. Also associates with MAPK14/p38-alpha. Activated RPS6KA5 associates with and phosphorylates the NF-kappa-B p65 subunit RELA. Interacts with CREBBP and EP300. Mg(2+) serves as cofactor. Ser-376 and Thr-581 phosphorylation is required for kinase activity. Ser-376 and Ser-212 are autophosphorylated by the C-terminal kinase domain, and their phosphorylation is essential for the catalytic activity of the N-terminal kinase domain. Phosphorylated at Ser-360, Thr-581 and Thr-700 by MAPK1/ERK2, MAPK3/ERK1 and MAPK14/p38-alpha. Autophosphorylated at Ser-750, Ser-752 and Ser-758 by the N-terminal kinase domain. In terms of processing, ubiquitinated.

It localises to the nucleus. It carries out the reaction L-seryl-[protein] + ATP = O-phospho-L-seryl-[protein] + ADP + H(+). It catalyses the reaction L-threonyl-[protein] + ATP = O-phospho-L-threonyl-[protein] + ADP + H(+). With respect to regulation, activated by phosphorylation at Ser-360, Thr-581 and Thr-700 by MAPK1/ERK2, MAPK3/ERK1 and MAPK14/p38-alpha, and by further autophosphorylation of Ser-212, Ser-376 and Ser-381 by the activated C-terminal kinase domain. The active N-terminal kinase domain finally phosphorylates downstream substrates, as well as Ser-750, Ser-752 and Ser-758 in its own C-terminal region. Functionally, serine/threonine-protein kinase that is required for the mitogen or stress-induced phosphorylation of the transcription factors CREB1 and ATF1 and for the regulation of the transcription factors RELA, STAT3 and ETV1/ER81, and that contributes to gene activation by histone phosphorylation and functions in the regulation of inflammatory genes. Phosphorylates CREB1 and ATF1 in response to mitogenic or stress stimuli such as UV-C irradiation, epidermal growth factor (EGF) and anisomycin. Plays an essential role in the control of RELA transcriptional activity in response to TNF and upon glucocorticoid, associates in the cytoplasm with the glucocorticoid receptor NR3C1 and contributes to RELA inhibition and repression of inflammatory gene expression. In skeletal myoblasts is required for phosphorylation of RELA at 'Ser-276' during oxidative stress. In erythropoietin-stimulated cells, is necessary for the 'Ser-727' phosphorylation of STAT3 and regulation of its transcriptional potential. Phosphorylates ETV1/ER81 at 'Ser-191' and 'Ser-216', and thereby regulates its ability to stimulate transcription, which may be important during development and breast tumor formation. Directly represses transcription via phosphorylation of 'Ser-1' of histone H2A. Phosphorylates 'Ser-10' of histone H3 in response to mitogenics, stress stimuli and EGF, which results in the transcriptional activation of several immediate early genes, including proto-oncogenes c-fos/FOS and c-jun/JUN. May also phosphorylate 'Ser-28' of histone H3. Mediates the mitogen- and stress-induced phosphorylation of high mobility group protein 1 (HMGN1/HMG14). In lipopolysaccharide-stimulated primary macrophages, acts downstream of the Toll-like receptor TLR4 to limit the production of pro-inflammatory cytokines. Functions probably by inducing transcription of the MAP kinase phosphatase DUSP1 and the anti-inflammatory cytokine interleukin 10 (IL10), via CREB1 and ATF1 transcription factors. Plays a role in neuronal cell death by mediating the downstream effects of excitotoxic injury. Phosphorylates TRIM7 at 'Ser-107' in response to growth factor signaling via the MEK/ERK pathway, thereby stimulating its ubiquitin ligase activity. This chain is Ribosomal protein S6 kinase alpha-5 (RPS6KA5), found in Pongo abelii (Sumatran orangutan).